We begin with the raw amino-acid sequence, 427 residues long: Inward rectifier potassium channel 2 (427 aa).

Topologically, residues 1-81 are cytoplasmic; it reads MGSVRTNRYS…IFTTCVDIRW (81 aa). C76 bears the S-nitrosocysteine mark. Residues 82–106 form a helical membrane-spanning segment; that stretch reads RWMLVIFCLAFVLSWLFFGCVFWLI. At 107–128 the chain is on the extracellular side; it reads ALLHGDLDASKEGKACVSEVNS. An intramembrane region (helical; Pore-forming) is located at residues 129–140; it reads FTAAFLFSIETQ. Positions 141–147 form an intramembrane region, pore-forming; the sequence is TTIGYGF. The Selectivity filter motif lies at 142–147; the sequence is TIGYGF. Topologically, residues 148-156 are extracellular; it reads RCVTDECPI. Residues 157-178 form a helical membrane-spanning segment; the sequence is AVFMVVFQSIVGCIIDAFIIGA. Topologically, residues 179–427 are cytoplasmic; the sequence is VMAKMAKPKK…PRPLRRESEI (249 aa). A polyphosphoinositide (PIP2)-binding region spans residues 181 to 208; sequence AKMAKPKKRNETLVFSHNAVIAMRDGKL. Residues 384-427 form a disordered region; the sequence is SKEEDDSENGVPESTSTDTPPDIDLHNQASVPLEPRPLRRESEI. The PDZ-binding motif lies at 425–427; sequence SEI.

Belongs to the inward rectifier-type potassium channel (TC 1.A.2.1) family. KCNJ2 subfamily. Homotetramer. Homomultimeric and heteromultimeric association with KCNJ4/Kir2.3. Can form heteromeric channels with Kir2.6/KCNJ18. Associates, via its PDZ-recognition domain, with a complex containing LIN7A, LIN7B, LIN7C, DLG1, CASK and APBA1. In terms of processing, S-nitrosylation increases the open probability and inward rectifying currents.

Its subcellular location is the cell membrane. The protein localises to the sarcolemma. It localises to the T-tubule. It carries out the reaction K(+)(in) = K(+)(out). Its activity is regulated as follows. Activated by phosphatidylinositol 4,5 biphosphate (PtdIns(4,5)P2). Functionally, inward rectifier potassium channels are characterized by a greater tendency to allow potassium to flow into the cell rather than out of it. Their voltage dependence is regulated by the concentration of extracellular potassium; as external potassium is raised, the voltage range of the channel opening shifts to more positive voltages. The inward rectification is mainly due to the blockage of outward current by internal magnesium. Can be blocked by extracellular barium or cesium. Probably participates in establishing action potential waveform and excitability of neuronal and muscle tissues. In Macaca mulatta (Rhesus macaque), this protein is Inward rectifier potassium channel 2 (KCNJ2).